The following is a 431-amino-acid chain: Glutamate-1-semialdehyde 2,1-aminomutase (431 aa).

Lysine 269 bears the N6-(pyridoxal phosphate)lysine mark.

This sequence belongs to the class-III pyridoxal-phosphate-dependent aminotransferase family. HemL subfamily. As to quaternary structure, homodimer. The cofactor is pyridoxal 5'-phosphate.

It is found in the cytoplasm. It carries out the reaction (S)-4-amino-5-oxopentanoate = 5-aminolevulinate. It participates in porphyrin-containing compound metabolism; protoporphyrin-IX biosynthesis; 5-aminolevulinate from L-glutamyl-tRNA(Glu): step 2/2. Its pathway is porphyrin-containing compound metabolism; chlorophyll biosynthesis. The sequence is that of Glutamate-1-semialdehyde 2,1-aminomutase from Chlorobaculum tepidum (strain ATCC 49652 / DSM 12025 / NBRC 103806 / TLS) (Chlorobium tepidum).